We begin with the raw amino-acid sequence, 404 residues long: uncharacterized protein (404 aa).

The next 11 membrane-spanning stretches (helical) occupy residues 9 to 29 (IYLI…PYLS), 36 to 56 (GFGE…FIGL), 76 to 96 (LVVK…LLFC), 103 to 123 (IMFY…QLSI), 135 to 155 (FIQV…LEFY), 162 to 182 (KRIL…YLIY), 199 to 219 (AFFY…SFFI), 236 to 256 (LGLY…ILAI), 288 to 308 (IVPI…LFFL), 319 to 339 (IIVF…VNYL), and 366 to 386 (LIFT…LGIL).

It belongs to the polysaccharide synthase family. HI_0867/HI_1700 subfamily.

It localises to the cell membrane. This is an uncharacterized protein from Haemophilus influenzae (strain ATCC 51907 / DSM 11121 / KW20 / Rd).